The following is a 798-amino-acid chain: Phenylalanine--tRNA ligase beta subunit (798 aa).

A tRNA-binding domain is found at 39–148 (GKDLDNVVIG…EDAPIGTEYR (110 aa)). The 77-residue stretch at 401–477 (PQRAEISLNL…RMYGFDNIEA (77 aa)) folds into the B5 domain. Positions 455, 461, 464, and 465 each coordinate Mg(2+). In terms of domain architecture, FDX-ACB spans 705–797 (SKYPEVLRDL…IKDKYNGEIR (93 aa)).

It belongs to the phenylalanyl-tRNA synthetase beta subunit family. Type 1 subfamily. In terms of assembly, tetramer of two alpha and two beta subunits. Mg(2+) serves as cofactor.

It localises to the cytoplasm. It catalyses the reaction tRNA(Phe) + L-phenylalanine + ATP = L-phenylalanyl-tRNA(Phe) + AMP + diphosphate + H(+). The chain is Phenylalanine--tRNA ligase beta subunit from Fusobacterium nucleatum subsp. nucleatum (strain ATCC 25586 / DSM 15643 / BCRC 10681 / CIP 101130 / JCM 8532 / KCTC 2640 / LMG 13131 / VPI 4355).